A 358-amino-acid chain; its full sequence is UDP-N-acetylglucosamine--N-acetylmuramyl-(pentapeptide) pyrophosphoryl-undecaprenol N-acetylglucosamine transferase (358 aa).

Residues 12 to 14 (TAG), arginine 165, serine 195, and glutamine 290 contribute to the UDP-N-acetyl-alpha-D-glucosamine site.

The protein belongs to the glycosyltransferase 28 family. MurG subfamily.

The protein localises to the cell membrane. The enzyme catalyses di-trans,octa-cis-undecaprenyl diphospho-N-acetyl-alpha-D-muramoyl-L-alanyl-D-glutamyl-meso-2,6-diaminopimeloyl-D-alanyl-D-alanine + UDP-N-acetyl-alpha-D-glucosamine = di-trans,octa-cis-undecaprenyl diphospho-[N-acetyl-alpha-D-glucosaminyl-(1-&gt;4)]-N-acetyl-alpha-D-muramoyl-L-alanyl-D-glutamyl-meso-2,6-diaminopimeloyl-D-alanyl-D-alanine + UDP + H(+). It participates in cell wall biogenesis; peptidoglycan biosynthesis. Cell wall formation. Catalyzes the transfer of a GlcNAc subunit on undecaprenyl-pyrophosphoryl-MurNAc-pentapeptide (lipid intermediate I) to form undecaprenyl-pyrophosphoryl-MurNAc-(pentapeptide)GlcNAc (lipid intermediate II). This is UDP-N-acetylglucosamine--N-acetylmuramyl-(pentapeptide) pyrophosphoryl-undecaprenol N-acetylglucosamine transferase from Clostridium tetani (strain Massachusetts / E88).